The primary structure comprises 1096 residues: Eukaryotic translation initiation factor 3 subunit A (1096 aa).

The PCI domain occupies 323–502 (QATRVLLATL…GSIHFGAADA (180 aa)). Coiled-coil stretches lie at residues 591 to 643 (SERQ…IDRK), 677 to 761 (SVLR…RMQK), and 811 to 839 (KEGAEERMASAREVAEQTRRDEQEKERRA). A compositionally biased stretch (basic and acidic residues) spans 808 to 852 (ELPKEGAEERMASAREVAEQTRRDEQEKERRAVRESQRPSKREIV). The interval 808–1096 (ELPKEGAEER…ADDDRNWRQK (289 aa)) is disordered. Residues 865 to 875 (AQPTQPRTISS) show a composition bias toward polar residues. Basic and acidic residues-rich tracts occupy residues 878-890 (FGERFVEGERYRE), 933-942 (SNREQARGEA), and 955-973 (QRDRDQSVGKQPLMEKRGE). Over residues 1008-1023 (DSSQRTSAATPTTQPW) the composition is skewed to polar residues. The segment covering 1085–1096 (GAADDDRNWRQK) has biased composition (basic and acidic residues).

The protein belongs to the eIF-3 subunit A family. In terms of assembly, component of the eukaryotic translation initiation factor 3 (eIF-3) complex.

It localises to the cytoplasm. Its function is as follows. RNA-binding component of the eukaryotic translation initiation factor 3 (eIF-3) complex, which is involved in protein synthesis of a specialized repertoire of mRNAs and, together with other initiation factors, stimulates binding of mRNA and methionyl-tRNAi to the 40S ribosome. The eIF-3 complex specifically targets and initiates translation of a subset of mRNAs involved in cell proliferation. The sequence is that of Eukaryotic translation initiation factor 3 subunit A from Brugia malayi (Filarial nematode worm).